Here is a 1357-residue protein sequence, read N- to C-terminus: DNA-directed RNA polymerase subunit beta (1357 aa).

The protein belongs to the RNA polymerase beta chain family. As to quaternary structure, the RNAP catalytic core consists of 2 alpha, 1 beta, 1 beta' and 1 omega subunit. When a sigma factor is associated with the core the holoenzyme is formed, which can initiate transcription.

The enzyme catalyses RNA(n) + a ribonucleoside 5'-triphosphate = RNA(n+1) + diphosphate. Functionally, DNA-dependent RNA polymerase catalyzes the transcription of DNA into RNA using the four ribonucleoside triphosphates as substrates. This Ectopseudomonas mendocina (strain ymp) (Pseudomonas mendocina) protein is DNA-directed RNA polymerase subunit beta.